The primary structure comprises 492 residues: Stomatal closure-related actin-binding protein 2 (492 aa).

Residues 112–132 (LKKLRDALETMRGRMDGRNRE) are a coiled coil.

Belongs to the SCAB family. As to expression, expressed in roots, stems, leaves, siliques and flowers.

Its subcellular location is the cytoplasm. The protein localises to the cytoskeleton. Probable plant-specific actin binding protein that bundles and stabilizes microfilaments (MFs). In Arabidopsis thaliana (Mouse-ear cress), this protein is Stomatal closure-related actin-binding protein 2.